Consider the following 309-residue polypeptide: Wall-associated proteinase (309 aa).

N-linked (GlcNAc...) asparagine glycosylation is found at asparagine 190 and asparagine 295.

Its subcellular location is the secreted. The protein resides in the cell wall. It localises to the membrane. Functionally, may participate in wall plasticization and/or intussusception or in cell wall turnover. This Coccidioides posadasii (strain RMSCC 757 / Silveira) (Valley fever fungus) protein is Wall-associated proteinase.